The chain runs to 377 residues: Chaperone protein DnaJ (377 aa).

The J domain maps to 4–69 (DYYEALGVTR…QKRAAYDRFG (66 aa)). A CR-type zinc finger spans residues 135-213 (GKTAQIRVPT…CHGQGRVTQE (79 aa)). Residues Cys148, Cys151, Cys165, Cys168, Cys187, Cys190, Cys201, and Cys204 each contribute to the Zn(2+) site. CXXCXGXG motif repeat units lie at residues 148–155 (CDECSGSG), 165–172 (CTMCSGSG), 187–194 (CPGCNGRG), and 201–208 (CEKCHGQG).

It belongs to the DnaJ family. As to quaternary structure, homodimer. Zn(2+) is required as a cofactor.

It is found in the cytoplasm. Functionally, participates actively in the response to hyperosmotic and heat shock by preventing the aggregation of stress-denatured proteins and by disaggregating proteins, also in an autonomous, DnaK-independent fashion. Unfolded proteins bind initially to DnaJ; upon interaction with the DnaJ-bound protein, DnaK hydrolyzes its bound ATP, resulting in the formation of a stable complex. GrpE releases ADP from DnaK; ATP binding to DnaK triggers the release of the substrate protein, thus completing the reaction cycle. Several rounds of ATP-dependent interactions between DnaJ, DnaK and GrpE are required for fully efficient folding. Also involved, together with DnaK and GrpE, in the DNA replication of plasmids through activation of initiation proteins. The polypeptide is Chaperone protein DnaJ (Brucella abortus (strain S19)).